The sequence spans 1034 residues: Enteropeptidase (1034 aa).

A propeptide spanning residues 1 to 51 (MGSKRIIPSRHRSLSTYEVMFTALFAILMVLCAGLIAVSWLTIKGSEKDAA) is cleaved from the precursor. Topologically, residues 2–18 (GSKRIIPSRHRSLSTYE) are cytoplasmic. A helical; Signal-anchor for type II membrane protein membrane pass occupies residues 19–47 (VMFTALFAILMVLCAGLIAVSWLTIKGSE). At 48–1034 (KDAALGKSHE…FTEWIQSFLH (987 aa)) the chain is on the extracellular side. One can recognise an SEA domain in the interval 54 to 169 (KSHEARGTMK…NSIDITESLE (116 aa)). N-linked (GlcNAc...) asparagine glycosylation is found at N116, N147, N170, and N194. The LDL-receptor class A 1 domain occupies 197-238 (IECLPGSRPCADALKCIAVDLFCDGELNCPDGSDEDSKICAT). 4 disulfides stabilise this stretch: C199–C212, C206–C225, C219–C236, and C240–C268. In terms of domain architecture, CUB 1 spans 240–349 (CDGKFLLTES…IGFNATYTAF (110 aa)). Residues N283, N343, N350, N403, N455, N485, N518, N549, and N645 are each glycosylated (N-linked (GlcNAc...) asparagine). The MAM domain occupies 357–519 (DEKINCNFED…ISLTYGICNV (163 aa)). A disulfide bridge connects residues C539 and C567. A CUB 2 domain is found at 539-649 (CGGPFELWEP…GGFKANFTTG (111 aa)). Residues 656–694 (EPCKEDNFQCENGECVLLVNLCDGFSHCKDGSDEAHCVR) form the LDL-receptor class A 2 domain. Disulfide bonds link C658/C670, C665/C683, and C677/C692. An SRCR domain is found at 693-786 (VRFLNGTANN…LILLQCNHKS (94 aa)). 5 N-linked (GlcNAc...) asparagine glycosylation sites follow: N697, N701, N721, N740, and N761. Intrachain disulfides connect C772-C782, C787-C911, C825-C841, C925-C992, C956-C971, and C982-C1010. Positions 800 to 1034 (IVGGNDSREG…FTEWIQSFLH (235 aa)) constitute a Peptidase S1 domain. N804 carries an N-linked (GlcNAc...) asparagine glycan. H840 serves as the catalytic Charge relay system. N863 carries an N-linked (GlcNAc...) asparagine glycan. D891 acts as the Charge relay system in catalysis. Residues N902 and N964 are each glycosylated (N-linked (GlcNAc...) asparagine). The active-site Charge relay system is the S986.

The protein belongs to the peptidase S1 family. As to quaternary structure, heterotrimer of a catalytic (light) chain, a multidomain (heavy) chain, and a mini chain. The chains are derived from a single precursor that is cleaved by a trypsin-like protease. Post-translationally, the mini chain may be cleaved by elastase.

It is found in the membrane. The catalysed reaction is Activation of trypsinogen by selective cleavage of 6-Lys-|-Ile-7 bond.. Responsible for initiating activation of pancreatic proteolytic proenzymes (trypsin, chymotrypsin and carboxypeptidase A). It catalyzes the conversion of trypsinogen to trypsin which in turn activates other proenzymes including chymotrypsinogen, procarboxypeptidases, and proelastases. This Sus scrofa (Pig) protein is Enteropeptidase (TMPRSS15).